The chain runs to 416 residues: Serine hydroxymethyltransferase (416 aa).

(6S)-5,6,7,8-tetrahydrofolate-binding positions include Leu-117 and 121–123; that span reads GHL. The residue at position 225 (Lys-225) is an N6-(pyridoxal phosphate)lysine. A (6S)-5,6,7,8-tetrahydrofolate-binding site is contributed by 351 to 353; that stretch reads SPF.

The protein belongs to the SHMT family. As to quaternary structure, homodimer. It depends on pyridoxal 5'-phosphate as a cofactor.

The protein localises to the cytoplasm. The enzyme catalyses (6R)-5,10-methylene-5,6,7,8-tetrahydrofolate + glycine + H2O = (6S)-5,6,7,8-tetrahydrofolate + L-serine. The protein operates within one-carbon metabolism; tetrahydrofolate interconversion. Its pathway is amino-acid biosynthesis; glycine biosynthesis; glycine from L-serine: step 1/1. Functionally, catalyzes the reversible interconversion of serine and glycine with tetrahydrofolate (THF) serving as the one-carbon carrier. This reaction serves as the major source of one-carbon groups required for the biosynthesis of purines, thymidylate, methionine, and other important biomolecules. Also exhibits THF-independent aldolase activity toward beta-hydroxyamino acids, producing glycine and aldehydes, via a retro-aldol mechanism. The sequence is that of Serine hydroxymethyltransferase from Blochmanniella pennsylvanica (strain BPEN).